Reading from the N-terminus, the 718-residue chain is Mitochondrial potassium channel ATP-binding subunit (718 aa).

Residues 1-25 constitute a mitochondrion transit peptide; sequence MLVHLFRVGIRGGPFPGRLLPPLRF. 3 consecutive transmembrane segments (helical) span residues 128 to 148, 179 to 199, and 279 to 299; these read LLVL…NVQI, THLL…LVLL, and LLLM…GSGL. The ABC transmembrane type-1 domain maps to 133-420; the sequence is VAVVLALGAA…LSVLFGQVVR (288 aa). Residues 455 to 692 form the ABC transporter domain; sequence VTFQNVCFSY…GGLYAELIRR (238 aa). Residue 490–497 coordinates ATP; that stretch reads GQSGGGKT. Residues 697-718 are disordered; sequence APRTAAPLPKKPEGPRNHQHKS.

Belongs to the ABC transporter superfamily. ABCB family. Multidrug resistance exporter (TC 3.A.1.201) subfamily. In terms of assembly, the mitochondrial potassium channel (mitoK(ATP)) is composed of 4 subunits of CCDC51/MITOK and 4 subunits of ABCB8/MITOSUR. Physically interacts with PAAT. Interacts with Neuropilin-1 (NRP1) in mitochondria.

The protein resides in the mitochondrion inner membrane. Its activity is regulated as follows. Channel activity inhibited by ATP via ABCB8/MITOSUR subunit. Functionally, ATP-binding subunit of the mitochondrial ATP-gated potassium channel (mitoK(ATP)). Together with pore-forming subunit CCDC51/MITOK of the mitoK(ATP) channel, mediates ATP-dependent potassium currents across the mitochondrial inner membrane. An increase in ATP intracellular levels closes the channel, inhibiting K(+) transport, whereas a decrease in ATP levels enhances K(+) uptake in the mitochondrial matrix. Plays a role in mitochondrial iron transport. Required for maintenance of normal cardiac function, possibly by influencing mitochondrial iron export and regulating the maturation of cytosolic iron sulfur cluster-containing enzymes. This chain is Mitochondrial potassium channel ATP-binding subunit (ABCB8), found in Pongo abelii (Sumatran orangutan).